The following is a 121-amino-acid chain: Small ribosomal subunit protein uS13 (121 aa).

Residues 94 to 121 (GLPVRGQSSKTNARTVKGPRKTVANKKK) are disordered. Positions 110–121 (KGPRKTVANKKK) are enriched in basic residues.

This sequence belongs to the universal ribosomal protein uS13 family. As to quaternary structure, part of the 30S ribosomal subunit. Forms a loose heterodimer with protein S19. Forms two bridges to the 50S subunit in the 70S ribosome.

Functionally, located at the top of the head of the 30S subunit, it contacts several helices of the 16S rRNA. In the 70S ribosome it contacts the 23S rRNA (bridge B1a) and protein L5 of the 50S subunit (bridge B1b), connecting the 2 subunits; these bridges are implicated in subunit movement. Contacts the tRNAs in the A and P-sites. This is Small ribosomal subunit protein uS13 from Mesoplasma florum (strain ATCC 33453 / NBRC 100688 / NCTC 11704 / L1) (Acholeplasma florum).